Here is a 111-residue protein sequence, read N- to C-terminus: Aquaporin-2 (111 aa).

The Cytoplasmic portion of the chain corresponds to 1–6 (SIAFSR). The chain crosses the membrane as a helical span at residues 7 to 27 (AVFSEFLATLLFVFFGLGSAL). Residues 28–37 (NWPSTVPIPT) lie on the Extracellular side of the membrane. Residues 38–56 (VLQISMAFGLAIGTLVQTL) form a helical membrane-spanning segment. The Cytoplasmic portion of the chain corresponds to 57–61 (GHISG). An intramembrane region (discontinuously helical) is located at residues 62–71 (AHINPAVTVA). The short motif at 65–67 (NPA) is the NPA 1 element. Topologically, residues 72 to 82 (CLVGCHVSFLR) are cytoplasmic. A helical transmembrane segment spans residues 83-104 (ATFYVAAQLLGAVAGAALLHKL). At 105–111 (TPEDIRG) the chain is on the extracellular side.

It belongs to the MIP/aquaporin (TC 1.A.8) family. In terms of assembly, homotetramer. Serine phosphorylation is necessary and sufficient for expression at the apical membrane. Endocytosis is not phosphorylation-dependent. In terms of processing, N-glycosylated.

The protein resides in the apical cell membrane. It localises to the basolateral cell membrane. Its subcellular location is the cell membrane. The protein localises to the cytoplasmic vesicle membrane. It is found in the golgi apparatus. The protein resides in the trans-Golgi network membrane. The catalysed reaction is H2O(in) = H2O(out). It carries out the reaction glycerol(in) = glycerol(out). Forms a water-specific channel that provides the plasma membranes of renal collecting duct with high permeability to water, thereby permitting water to move in the direction of an osmotic gradient. Plays an essential role in renal water homeostasis. Could also be permeable to glycerol. The chain is Aquaporin-2 from Macroscelides proboscideus (Short-eared elephant shrew).